Here is a 106-residue protein sequence, read N- to C-terminus: Large ribosomal subunit protein uL23 (106 aa).

It belongs to the universal ribosomal protein uL23 family. As to quaternary structure, part of the 50S ribosomal subunit. Contacts protein L29, and trigger factor when it is bound to the ribosome.

One of the early assembly proteins it binds 23S rRNA. One of the proteins that surrounds the polypeptide exit tunnel on the outside of the ribosome. Forms the main docking site for trigger factor binding to the ribosome. This is Large ribosomal subunit protein uL23 from Acinetobacter baumannii (strain SDF).